A 284-amino-acid chain; its full sequence is UPF0761 membrane protein IL2447 (284 aa).

6 helical membrane-spanning segments follow: residues 41-61 (MLSL…FPMF), 98-118 (MTAI…SAID), 137-157 (FAVY…GLAA), 178-198 (FVLW…MYQL), 214-234 (VIAA…ITFF), and 247-267 (IPIL…GAVL).

Belongs to the UPF0761 family.

Its subcellular location is the cell inner membrane. The chain is UPF0761 membrane protein IL2447 from Idiomarina loihiensis (strain ATCC BAA-735 / DSM 15497 / L2-TR).